The chain runs to 1230 residues: ATP-dependent helicase/nuclease subunit A (1230 aa).

The UvrD-like helicase ATP-binding domain maps to 3–473; the sequence is TKFTKNQQRA…IDLADNFRSQ (471 aa). 24–31 serves as a coordination point for ATP; it reads ASAGSGKT. Positions 500–782 constitute a UvrD-like helicase C-terminal domain; sequence EAKLVPKAAY…RIMTIHASKG (283 aa).

Belongs to the helicase family. AddA subfamily. Heterodimer of AddA and AddB/RexB. Mg(2+) serves as cofactor.

It carries out the reaction Couples ATP hydrolysis with the unwinding of duplex DNA by translocating in the 3'-5' direction.. The enzyme catalyses ATP + H2O = ADP + phosphate + H(+). Functionally, the heterodimer acts as both an ATP-dependent DNA helicase and an ATP-dependent, dual-direction single-stranded exonuclease. Recognizes the chi site generating a DNA molecule suitable for the initiation of homologous recombination. The AddA nuclease domain is required for chi fragment generation; this subunit has the helicase and 3' -&gt; 5' nuclease activities. The chain is ATP-dependent helicase/nuclease subunit A from Leuconostoc mesenteroides subsp. mesenteroides (strain ATCC 8293 / DSM 20343 / BCRC 11652 / CCM 1803 / JCM 6124 / NCDO 523 / NBRC 100496 / NCIMB 8023 / NCTC 12954 / NRRL B-1118 / 37Y).